Consider the following 452-residue polypeptide: MPKARAKKSEQTRRYDKNVIKAAQFDISPRDFSRNALNVVEKLQRQGFEAYIVGGCIRDLLLGKKPKDFDVATNARPEQIQNIFQRQCRLVGRRFRLAHIMFGRDIIEVATFRANHSDARNENQAKQSNEGMLLRDNVYGTIEQDAARRDFTVNALYYNPQDNTLRDYFEGIKDLKAGKLRLIGDPVTRYQEDPVRMLRSIRFMAKLDMFLEKPSEQPIRELAPLLKNIPPARLFDESLKLLQAGQGVKTYRLLRQYGLFEQLFPALSAYFTEKEDSFAERMIVTALTSTDERVADKLRINPAFLFAAFFWYPLREKVEILKNEGGLNNHDAYALAGNEVLDLFCRALAAPRRHTAVIRDIWFLQLQLLKRTGSAPMRTMEHPKFRAGFDLLAMRAEIEGGETIELAKWWHEYQFSNGEQREQLIQEQQRLHPKPKKKYYRPRRRKTTCSAE.

Active-site residues include Asp68, Asp70, and Asp150. Residues 427–452 (EQQRLHPKPKKKYYRPRRRKTTCSAE) form a disordered region. Residues 431–452 (LHPKPKKKYYRPRRRKTTCSAE) show a composition bias toward basic residues.

The protein belongs to the tRNA nucleotidyltransferase/poly(A) polymerase family.

The catalysed reaction is RNA(n) + ATP = RNA(n)-3'-adenine ribonucleotide + diphosphate. Adds poly(A) tail to the 3' end of many RNAs, which usually targets these RNAs for decay. Plays a significant role in the global control of gene expression, through influencing the rate of transcript degradation, and in the general RNA quality control. The sequence is that of Poly(A) polymerase I from Haemophilus influenzae (strain ATCC 51907 / DSM 11121 / KW20 / Rd).